The sequence spans 206 residues: Sclerostin domain-containing protein 1 (206 aa).

A signal peptide spans 1–22 (MLLSAIHFYGLLLACTFTRSYS). Residues 40-68 (APASPSSNSTLNQARNGGRHYAGTGSDRN) form a disordered region. Residues 43–54 (SPSSNSTLNQAR) are compositionally biased toward polar residues. A glycan (N-linked (GlcNAc...) asparagine) is linked at N47. 4 disulfide bridges follow: C75–C133, C89–C147, C100–C163, and C104–C165. The CTCK domain occupies 75 to 170 (CRELRSTKYI…TACKCKRYTR (96 aa)). N-linked (GlcNAc...) asparagine glycosylation is present at N173. The tract at residues 176-206 (SHNFEGTSQAKPVQHHKERKRASKSSKHSTS) is disordered. Over residues 188 to 206 (VQHHKERKRASKSSKHSTS) the composition is skewed to basic residues.

It belongs to the sclerostin family. As to quaternary structure, interacts with LRP6.

The protein localises to the secreted. Can activate or inhibit Wnt signaling in a context-dependent manner. Activates the canonical Wnt pathway whereby acts through Disheveled proteins and beta-catenin. Antagonises Wnt signaling through the canonical pathways presumably by blocking accessibility of certain WNTs to their receptors. Induces posterior neural markers via components of the canonical Wnt pathway. The polypeptide is Sclerostin domain-containing protein 1 (SOSTDC1) (Gallus gallus (Chicken)).